The following is a 236-amino-acid chain: Pyridoxine 5'-phosphate synthase (236 aa).

Position 6 (Asn-6) interacts with 3-amino-2-oxopropyl phosphate. 8-9 lines the 1-deoxy-D-xylulose 5-phosphate pocket; that stretch reads DH. Position 17 (Arg-17) interacts with 3-amino-2-oxopropyl phosphate. His-42 functions as the Proton acceptor in the catalytic mechanism. Residues Arg-44 and His-49 each contribute to the 1-deoxy-D-xylulose 5-phosphate site. The active-site Proton acceptor is the Glu-69. Thr-99 is a binding site for 1-deoxy-D-xylulose 5-phosphate. The active-site Proton donor is the His-192. 3-amino-2-oxopropyl phosphate is bound by residues Gly-193 and 216-217; that span reads GH.

Belongs to the PNP synthase family. In terms of assembly, homooctamer; tetramer of dimers.

The protein localises to the cytoplasm. The enzyme catalyses 3-amino-2-oxopropyl phosphate + 1-deoxy-D-xylulose 5-phosphate = pyridoxine 5'-phosphate + phosphate + 2 H2O + H(+). Its pathway is cofactor biosynthesis; pyridoxine 5'-phosphate biosynthesis; pyridoxine 5'-phosphate from D-erythrose 4-phosphate: step 5/5. Its function is as follows. Catalyzes the complicated ring closure reaction between the two acyclic compounds 1-deoxy-D-xylulose-5-phosphate (DXP) and 3-amino-2-oxopropyl phosphate (1-amino-acetone-3-phosphate or AAP) to form pyridoxine 5'-phosphate (PNP) and inorganic phosphate. This is Pyridoxine 5'-phosphate synthase from Aquifex pyrophilus.